The following is a 301-amino-acid chain: Syntaxin-17 (301 aa).

The residue at position 2 (serine 2) is an N-acetylserine. The Cytoplasmic segment spans residues 2–227; the sequence is SEDEEKVKLR…KNLQKAAKYK (226 aa). An N6-acetyllysine modification is found at lysine 41. Positions 49 to 128 form a coiled coil; it reads DKLHEEHINA…QVNDEELLQP (80 aa). Residue tyrosine 156 is modified to Phosphotyrosine; by ABL1. In terms of domain architecture, t-SNARE coiled-coil homology spans 161-223; sequence IPQDQNAAES…EEGTKNLQKA (63 aa). A helical membrane pass occupies residues 228-248; that stretch reads LAALPVAGALIGGVVGGPIGL. The segment at 228–274 is necessary and sufficient for localization to autophagosome; it reads LAALPVAGALIGGVVGGPIGLLAGFKVAGIAAALGGGVLGFTGGKLI. Over 249–253 the chain is Lumenal; the sequence is LAGFK. The chain crosses the membrane as a helical span at residues 254–274; it reads VAGIAAALGGGVLGFTGGKLI. Over 275-301 the chain is Cytoplasmic; it reads QRRKQKMMEKLTSSCPDLPSQSDKKRS. Position 288 is a phosphoserine (serine 288). The short motif at 298–301 is the Endoplasmic reticulum retention signal element; sequence KKRS.

Belongs to the syntaxin family. As to quaternary structure, forms a SNARE complex composed of VAMP8, SNAP29 and STX17 involved in fusion of autophagosome with lysosome. May interact with VTI1B. Probably interacts with BET1, SCFD1 and SEC22B. Interacts with PTPN2 and ABL1; involved in STX17 phosphorylation. Interacts with COPB1. Interacts with TMED9 and TMED10; the interaction is direct. Interacts with VAMP7. Interacts with RUBCNL/PACER; promoting targeting of RUBCNL/PACER to autophagosome. Interacts with VAMP8, SNAP29, VPS39 and VPS41; these interactions are increased in the absence of TMEM39A. Interacts with IRGM; promoting STX17 recruitment to autophagosomes. Interacts with ATG8 proteins GABARAP and MAP1LC3B. Interacts with RNF115; this interaction enhances STX17 stability which in turn promotes autophagosome maturation. Interacts with RAB39A (GTP-bound); the interaction promotes autophagosome-lysosome membrane fusion driven by STX17-SNAP29-VAMP8. Interacts with RAB39B; the interaction may promote a different fonction in autophagy as compared with RAB39A. In terms of processing, dephosphorylation by PTPN2; regulates exit from the endoplasmic reticulum. Phosphorylated at Tyr-156 probably by ABL1.

It is found in the endoplasmic reticulum membrane. The protein resides in the smooth endoplasmic reticulum membrane. Its subcellular location is the endoplasmic reticulum-Golgi intermediate compartment membrane. The protein localises to the cytoplasmic vesicle. It localises to the autophagosome membrane. It is found in the COPII-coated vesicle membrane. The protein resides in the cytoplasm. Its subcellular location is the cytosol. The protein localises to the mitochondrion membrane. It localises to the autolysosome membrane. In terms of biological role, SNAREs, soluble N-ethylmaleimide-sensitive factor-attachment protein receptors, are essential proteins for fusion of cellular membranes. SNAREs localized on opposing membranes assemble to form a trans-SNARE complex, an extended, parallel four alpha-helical bundle that drives membrane fusion. STX17 is a SNARE of the autophagosome involved in autophagy through the direct control of autophagosome membrane fusion with the lysosome membrane. May also play a role in the early secretory pathway where it may maintain the architecture of the endoplasmic reticulum-Golgi intermediate compartment/ERGIC and Golgi and/or regulate transport between the endoplasmic reticulum, the ERGIC and the Golgi. This Mus musculus (Mouse) protein is Syntaxin-17.